Here is a 430-residue protein sequence, read N- to C-terminus: Nucleoporin NUP42 (430 aa).

The segment at 1 to 68 (MSAFGNPFTS…AFGMPQFGTN (68 aa)) is disordered. The SXFG 1 repeat unit spans residues 2 to 5 (SAFG). The span at 15-36 (NLSNTSGINPFTNNAASTNNMG) shows a compositional bias: polar residues. SAFGXPXFG repeat units lie at residues 38–46 (SAFGRPSFG) and 58–66 (SAFGMPQFG). The segment covering 45–68 (FGTANTMTGGTTTSAFGMPQFGTN) has biased composition (low complexity). The SXFG 2 repeat unit spans residues 78 to 81 (SAFG). 2 SAFGXPXFG repeats span residues 90–98 (SAFGAPAFG) and 112–120 (SAFGAPSFG). The segment at 121-230 (STGFGAMAAT…QNTSTSSGTG (110 aa)) is interactions with CRM1 and GFD1. FG repeat units lie at residues 124 to 125 (FG) and 134 to 135 (FG). A Phosphoserine modification is found at serine 137. Residues 143 to 151 (SAFGQPAFG) form an SAFGXPXFG 5 repeat. SXFG repeat units follow at residues 168 to 171 (SAFG) and 182 to 185 (SPFG). Residues 180–294 (TTSPFGSLQQ…QSPFSGGSGG (115 aa)) are disordered. The span at 186–201 (SLQQNASQNASSTSSA) shows a compositional bias: low complexity. The SAFGXPXFG 6 repeat unit spans residues 200-208 (SAFGKPTFG). The segment covering 209 to 230 (AATNTQSPFGTIQNTSTSSGTG) has biased composition (polar residues). SXFG repeat units follow at residues 215 to 218 (SPFG) and 232 to 235 (SPFG). 2 stretches are compositionally biased toward polar residues: residues 237–252 (FGTN…NLQS) and 260–285 (PFGT…TNNQ). SXFG repeat units follow at residues 259–262 (SPFG) and 277–280 (SAFG). The FG 3 repeat unit spans residues 296-297 (FG). Serine 298 carries the phosphoserine modification. One copy of the SXFG 9 repeat lies at 312-315 (SSFG). FG repeat units lie at residues 319 to 322 (FSFG), 339 to 340 (FG), and 361 to 364 (FGFG). A disordered region spans residues 319-346 (FSFGITPQNDANKVSQSNPSFGQTMPNT). Residues 323–346 (ITPQNDANKVSQSNPSFGQTMPNT) show a composition bias toward polar residues. The interval 365-430 (QQQMNATNVN…DIPPPPALVA (66 aa)) is interaction with GLE1.

As to quaternary structure, component of the nuclear pore complex (NPC). NPC constitutes the exclusive means of nucleocytoplasmic transport. NPCs allow the passive diffusion of ions and small molecules and the active, nuclear transport receptor-mediated bidirectional transport of macromolecules such as proteins, RNAs, ribonucleoparticles (RNPs), and ribosomal subunits across the nuclear envelope. Due to its 8-fold rotational symmetry, all subunits are present with 8 copies or multiples thereof. NUP42 interacts with the NUP82 subcomplex. It interacts directly with GLE1, and through its FG repeats with GFD1, the heterodimeric mRNA transport factor MEX67/MTR2, and the karyopherin CRM1.

It is found in the nucleus. It localises to the nuclear pore complex. The protein localises to the nucleus membrane. Its function is as follows. Functions as a component of the nuclear pore complex (NPC). NPC components, collectively referred to as nucleoporins (NUPs), can play the role of both NPC structural components and of docking or interaction partners for transiently associated nuclear transport factors. Active directional transport is assured by both, a Phe-Gly (FG) repeat affinity gradient for these transport factors across the NPC and a transport cofactor concentration gradient across the nuclear envelope (GSP1 and GSP2 GTPases associated predominantly with GTP in the nucleus, with GDP in the cytoplasm). NUP42 is specifically important for nuclear protein and mRNA export. In Saccharomyces cerevisiae (strain ATCC 204508 / S288c) (Baker's yeast), this protein is Nucleoporin NUP42 (NUP42).